We begin with the raw amino-acid sequence, 494 residues long: GTPase Der (494 aa).

EngA-type G domains are found at residues 3–166 (PVVA…AEQM) and 206–379 (IKLA…RSAT). GTP is bound by residues 9–16 (GRPNVGKS), 56–60 (DTGGI), 118–121 (NKVD), 212–219 (GRPNVGKS), 259–263 (DTAGV), and 324–327 (NKWD). In terms of domain architecture, KH-like spans 380 to 464 (TRVGTSVLTR…PIRIQFQNSE (85 aa)).

This sequence belongs to the TRAFAC class TrmE-Era-EngA-EngB-Septin-like GTPase superfamily. EngA (Der) GTPase family. As to quaternary structure, associates with the 50S ribosomal subunit.

Its function is as follows. GTPase that plays an essential role in the late steps of ribosome biogenesis. The sequence is that of GTPase Der from Vibrio cholerae serotype O1 (strain ATCC 39541 / Classical Ogawa 395 / O395).